A 148-amino-acid chain; its full sequence is Large ribosomal subunit protein bL9 (148 aa).

Belongs to the bacterial ribosomal protein bL9 family.

Its function is as follows. Binds to the 23S rRNA. This chain is Large ribosomal subunit protein bL9, found in Methylobacillus flagellatus (strain ATCC 51484 / DSM 6875 / VKM B-1610 / KT).